The chain runs to 150 residues: 3-hydroxyacyl-[acyl-carrier-protein] dehydratase FabZ (150 aa).

His-52 is a catalytic residue.

Belongs to the thioester dehydratase family. FabZ subfamily.

It is found in the cytoplasm. It catalyses the reaction a (3R)-hydroxyacyl-[ACP] = a (2E)-enoyl-[ACP] + H2O. Its function is as follows. Involved in unsaturated fatty acids biosynthesis. Catalyzes the dehydration of short chain beta-hydroxyacyl-ACPs and long chain saturated and unsaturated beta-hydroxyacyl-ACPs. The sequence is that of 3-hydroxyacyl-[acyl-carrier-protein] dehydratase FabZ from Variovorax paradoxus (strain S110).